The chain runs to 429 residues: Serine hydroxymethyltransferase (429 aa).

(6S)-5,6,7,8-tetrahydrofolate is bound by residues leucine 126 and 130–132 (GHL). Lysine 235 bears the N6-(pyridoxal phosphate)lysine mark. 359–361 (SPF) lines the (6S)-5,6,7,8-tetrahydrofolate pocket.

Belongs to the SHMT family. As to quaternary structure, homodimer. Requires pyridoxal 5'-phosphate as cofactor.

The protein localises to the cytoplasm. The enzyme catalyses (6R)-5,10-methylene-5,6,7,8-tetrahydrofolate + glycine + H2O = (6S)-5,6,7,8-tetrahydrofolate + L-serine. It functions in the pathway one-carbon metabolism; tetrahydrofolate interconversion. The protein operates within amino-acid biosynthesis; glycine biosynthesis; glycine from L-serine: step 1/1. In terms of biological role, catalyzes the reversible interconversion of serine and glycine with tetrahydrofolate (THF) serving as the one-carbon carrier. This reaction serves as the major source of one-carbon groups required for the biosynthesis of purines, thymidylate, methionine, and other important biomolecules. Also exhibits THF-independent aldolase activity toward beta-hydroxyamino acids, producing glycine and aldehydes, via a retro-aldol mechanism. The sequence is that of Serine hydroxymethyltransferase from Parasynechococcus marenigrum (strain WH8102).